The sequence spans 470 residues: Crh-like protein UTR2 (470 aa).

The signal sequence occupies residues 1-23; it reads MRFSTLHFAFLATLSSIFTVVAA. Cys-58 and Cys-69 are disulfide-bonded. Asn-65, Asn-100, and Asn-125 each carry an N-linked (GlcNAc...) asparagine glycan. The GH16 domain maps to 95-282; the sequence is SDYLGNSTEA…WAGGLINWDS (188 aa). Glu-168 serves as the catalytic Nucleophile. Glu-172 functions as the Proton donor in the catalytic mechanism. Glu-172 serves as a coordination point for chitin. Asn-177, Asn-194, Asn-198, Asn-202, Asn-235, and Asn-239 each carry an N-linked (GlcNAc...) asparagine glycan. 2 residues coordinate chitin: Trp-259 and Thr-270. N-linked (GlcNAc...) asparagine glycosylation is found at Asn-314 and Asn-327. The disordered stretch occupies residues 347-446; it reads SDDATGFDPQ…SSGSSSQGVA (100 aa). Composition is skewed to low complexity over residues 370–384 and 392–408; these read TTIT…ITSV and TANV…QATA. Positions 409 to 418 are enriched in polar residues; sequence KSSTGTNTYD. Residues 433-446 show a composition bias toward low complexity; that stretch reads TDSGSSGSSSQGVA. Ser-440 carries the GPI-anchor amidated serine lipid modification. The propeptide at 441–470 is removed in mature form; that stretch reads SSQGVANSLNESVISGIFASICLGILSFFM. A glycan (N-linked (GlcNAc...) asparagine) is linked at Asn-450.

It belongs to the glycosyl hydrolase 16 family. CRH1 subfamily. In terms of processing, the GPI-anchor is attached to the protein in the endoplasmic reticulum and serves to target the protein to the cell surface. There, the glucosamine-inositol phospholipid moiety is cleaved off and the GPI-modified mannoprotein is covalently attached via its lipidless GPI glycan remnant to the 1,6-beta-glucan of the outer cell wall layer.

It is found in the secreted. It localises to the cell wall. The protein localises to the membrane. It catalyses the reaction Random endo-hydrolysis of N-acetyl-beta-D-glucosaminide (1-&gt;4)-beta-linkages in chitin and chitodextrins.. Dual chitinase/transglycosylase that plays a role in cell wall architecture. Chitinase and transglycosylase activities are coupled. Required for the polysaccharide cross-linking at the septa and the cell wall. More specifically, transfers chitin to 1,6-beta-glucan in the cell wall. Plays an important role in fungal pathogenesis via its functions in cell wall assembly and regeneration, filamentation, and adherence to host cells. Acts as a cell surface antigen in acute candidemia patients. The protein is Crh-like protein UTR2 of Candida albicans (strain SC5314 / ATCC MYA-2876) (Yeast).